Consider the following 785-residue polypeptide: Cadherin-7 (785 aa).

An N-terminal signal peptide occupies residues 1 to 27; the sequence is MKLGKVEFCHLLQIIALFLCLSGMNQA. Positions 28–47 are excised as a propeptide; sequence EPSRSRSKPYFQSGRTRTKR. The Extracellular segment spans residues 48–607; it reads SWVWNQFFVL…AYILPAGLST (560 aa). 5 consecutive Cadherin domains span residues 49–153, 154–262, 263–377, 378–482, and 482–599; these read WVWN…EPKF, LDGP…PPRF, PRRS…PPVF, TSRL…APEF, and FAME…AEAY. Residues Asn-449 and Asn-530 are each glycosylated (N-linked (GlcNAc...) asparagine). A helical membrane pass occupies residues 608–628; sequence GALIAILACVLTLLVLVLLIV. The Cytoplasmic portion of the chain corresponds to 629-785; that stretch reads TMRRRKKEPL…YGSGPDCLYS (157 aa).

The protein localises to the cell membrane. Cadherins are calcium-dependent cell adhesion proteins. They preferentially interact with themselves in a homophilic manner in connecting cells; cadherins may thus contribute to the sorting of heterogeneous cell types. The chain is Cadherin-7 (CDH7) from Gallus gallus (Chicken).